Here is a 221-residue protein sequence, read N- to C-terminus: Germin-like protein subfamily 1 member 17 (221 aa).

The signal sequence occupies residues 1 to 21 (MKVSMSLILITLSALVTIAKA). Cysteines 31 and 48 form a disulfide. Residues 76-213 (SNVTTVNVDQ…AFQLDVNVVK (138 aa)) form the Cupin type-1 domain. N-linked (GlcNAc...) asparagine glycosylation is present at Asn77. 4 residues coordinate Mn(2+): His110, His112, Glu117, and His159.

The protein belongs to the germin family. Oligomer (believed to be a pentamer but probably hexamer).

It localises to the secreted. Its subcellular location is the extracellular space. The protein resides in the apoplast. Functionally, may play a role in plant defense. Probably has no oxalate oxidase activity even if the active site is conserved. The chain is Germin-like protein subfamily 1 member 17 from Arabidopsis thaliana (Mouse-ear cress).